Reading from the N-terminus, the 130-residue chain is Small ribosomal subunit protein uS9 (130 aa).

The protein belongs to the universal ribosomal protein uS9 family.

The polypeptide is Small ribosomal subunit protein uS9 (Edwardsiella ictaluri (strain 93-146)).